Here is a 511-residue protein sequence, read N- to C-terminus: Bifunctional purine biosynthesis protein PurH (511 aa).

Residues 1 to 147 (MIQIKRALIS…KNYKHTLVLT (147 aa)) form the MGS-like domain.

The protein belongs to the PurH family.

The catalysed reaction is (6R)-10-formyltetrahydrofolate + 5-amino-1-(5-phospho-beta-D-ribosyl)imidazole-4-carboxamide = 5-formamido-1-(5-phospho-D-ribosyl)imidazole-4-carboxamide + (6S)-5,6,7,8-tetrahydrofolate. It carries out the reaction IMP + H2O = 5-formamido-1-(5-phospho-D-ribosyl)imidazole-4-carboxamide. The protein operates within purine metabolism; IMP biosynthesis via de novo pathway; 5-formamido-1-(5-phospho-D-ribosyl)imidazole-4-carboxamide from 5-amino-1-(5-phospho-D-ribosyl)imidazole-4-carboxamide (10-formyl THF route): step 1/1. It participates in purine metabolism; IMP biosynthesis via de novo pathway; IMP from 5-formamido-1-(5-phospho-D-ribosyl)imidazole-4-carboxamide: step 1/1. This is Bifunctional purine biosynthesis protein PurH from Leptospira borgpetersenii serovar Hardjo-bovis (strain JB197).